A 92-amino-acid chain; its full sequence is Small ribosomal subunit protein uS19 (92 aa).

This sequence belongs to the universal ribosomal protein uS19 family.

Protein S19 forms a complex with S13 that binds strongly to the 16S ribosomal RNA. This Enterococcus faecalis (strain ATCC 700802 / V583) protein is Small ribosomal subunit protein uS19.